Reading from the N-terminus, the 242-residue chain is UPF0246 protein SP_1547 (242 aa).

Belongs to the UPF0246 family.

This Streptococcus pneumoniae serotype 4 (strain ATCC BAA-334 / TIGR4) protein is UPF0246 protein SP_1547.